Reading from the N-terminus, the 195-residue chain is dITP/XTP pyrophosphatase (195 aa).

7–12 (SSNKGK) lines the substrate pocket. Glutamate 38 and aspartate 68 together coordinate Mg(2+). Aspartate 68 (proton acceptor) is an active-site residue. Residues serine 69, 150–153 (FGYD), lysine 173, and 178–179 (HR) each bind substrate.

Belongs to the HAM1 NTPase family. In terms of assembly, homodimer. Mg(2+) is required as a cofactor.

It carries out the reaction XTP + H2O = XMP + diphosphate + H(+). The enzyme catalyses dITP + H2O = dIMP + diphosphate + H(+). The catalysed reaction is ITP + H2O = IMP + diphosphate + H(+). In terms of biological role, pyrophosphatase that catalyzes the hydrolysis of nucleoside triphosphates to their monophosphate derivatives, with a high preference for the non-canonical purine nucleotides XTP (xanthosine triphosphate), dITP (deoxyinosine triphosphate) and ITP. Seems to function as a house-cleaning enzyme that removes non-canonical purine nucleotides from the nucleotide pool, thus preventing their incorporation into DNA/RNA and avoiding chromosomal lesions. In Nautilia profundicola (strain ATCC BAA-1463 / DSM 18972 / AmH), this protein is dITP/XTP pyrophosphatase.